A 197-amino-acid polypeptide reads, in one-letter code: Dephospho-CoA kinase (197 aa).

The DPCK domain occupies 5-197 (RLGLTGSIGM…IAHIRETADA (193 aa)). 13–18 (GMGKST) contacts ATP.

Belongs to the CoaE family.

It is found in the cytoplasm. It catalyses the reaction 3'-dephospho-CoA + ATP = ADP + CoA + H(+). Its pathway is cofactor biosynthesis; coenzyme A biosynthesis; CoA from (R)-pantothenate: step 5/5. In terms of biological role, catalyzes the phosphorylation of the 3'-hydroxyl group of dephosphocoenzyme A to form coenzyme A. The protein is Dephospho-CoA kinase of Cereibacter sphaeroides (strain ATCC 17023 / DSM 158 / JCM 6121 / CCUG 31486 / LMG 2827 / NBRC 12203 / NCIMB 8253 / ATH 2.4.1.) (Rhodobacter sphaeroides).